Reading from the N-terminus, the 247-residue chain is ATP synthase subunit a, chloroplastic (247 aa).

The next 5 helical transmembrane spans lie at 38-58 (QVLITSWVVITILLGSVIIAV), 95-115 (VPFIGTMFLFIFVSNWSGALL), 134-154 (INTTVALALLTSAAYFYAGLS), 199-219 (LVVVVLVSLVPLVVPIPVMFL), and 220-240 (GLFTSGIQALIFATLAAAYIG).

It belongs to the ATPase A chain family. As to quaternary structure, F-type ATPases have 2 components, CF(1) - the catalytic core - and CF(0) - the membrane proton channel. CF(1) has five subunits: alpha(3), beta(3), gamma(1), delta(1), epsilon(1). CF(0) has four main subunits: a, b, b' and c.

It is found in the plastid. It localises to the chloroplast thylakoid membrane. Functionally, key component of the proton channel; it plays a direct role in the translocation of protons across the membrane. The polypeptide is ATP synthase subunit a, chloroplastic (Oryza sativa subsp. indica (Rice)).